Consider the following 342-residue polypeptide: UDP-3-O-acylglucosamine N-acyltransferase (342 aa).

His-242 functions as the Proton acceptor in the catalytic mechanism.

Belongs to the transferase hexapeptide repeat family. LpxD subfamily. Homotrimer.

It catalyses the reaction a UDP-3-O-[(3R)-3-hydroxyacyl]-alpha-D-glucosamine + a (3R)-hydroxyacyl-[ACP] = a UDP-2-N,3-O-bis[(3R)-3-hydroxyacyl]-alpha-D-glucosamine + holo-[ACP] + H(+). Its pathway is bacterial outer membrane biogenesis; LPS lipid A biosynthesis. Catalyzes the N-acylation of UDP-3-O-acylglucosamine using 3-hydroxyacyl-ACP as the acyl donor. Is involved in the biosynthesis of lipid A, a phosphorylated glycolipid that anchors the lipopolysaccharide to the outer membrane of the cell. The protein is UDP-3-O-acylglucosamine N-acyltransferase of Leptothrix cholodnii (strain ATCC 51168 / LMG 8142 / SP-6) (Leptothrix discophora (strain SP-6)).